We begin with the raw amino-acid sequence, 92 residues long: MDISTDNPDHGFQFPGTFELSAMGAAERGLETELPRLLAATGVELLQESVSWKHSSSGKYVSVKIGFRAESREQFDAAHQALRDHPEVKWTL.

Belongs to the UPF0250 family.

This is UPF0250 protein XOO3732 from Xanthomonas oryzae pv. oryzae (strain MAFF 311018).